Consider the following 2327-residue polypeptide: Nonribosomal peptide synthetase apmB (2327 aa).

The segment at 214–605 (DTQAKSRPDS…GRKDMQIKLR (392 aa)) is adenylation 1. In terms of domain architecture, Carrier 1 spans 734–810 (EPATATGKVL…EMADACTKVI (77 aa)). Residue S771 is modified to O-(pantetheine 4'-phosphoryl)serine. The condensation 1 stretch occupies residues 845 to 1259 (EDLYPCTAMQ…IFISSKDQES (415 aa)). Residues 1281-1675 (ERIAERPDHE…RRKDTQVKLR (395 aa)) form an adenylation 2 region. The 77-residue stretch at 1816–1892 (PPTTDMQITM…AISAVAETLS (77 aa)) folds into the Carrier 2 domain. S1853 bears the O-(pantetheine 4'-phosphoryl)serine mark. Positions 1937-2260 (TDFQSLAING…VFQYQDFGGE (324 aa)) are condensation 2. Positions 2299-2327 (RVDLPRRPSPAGDTRDGPTAASDSPSRAR) are disordered.

It belongs to the NRP synthetase family.

It catalyses the reaction N-benzoyl-L-phenylalaninol + benzoate + L-phenylalanine + 2 ATP = asperphenamate + 2 AMP + 2 diphosphate + H(+). It participates in secondary metabolite biosynthesis. In terms of biological role, nonribosomal peptide synthetase; part of the gene cluster that mediates the biosynthesis of asperphenamate, a rare linear amino acid ester that exhibits antitumor activity towards a number of cell lines. The structure of asperphenamate contains two subunits, N-benzoylphenylalanine and N-benzoylphenylalaninol, which are connected by an inter-molecular ester bond. The first step of asperphenamate biosynthesis is the generation of N-benzoylphenylalaninol by the nonribosomal peptide synthase apmA. Using phenylalanine and benzoic acid as substrates, apmA catalyzes amide bond formation and tethers the intermediate into the NRPS chain. Then, the terminal R domain of apmA catalyzes the reduction reaction to get the shunt product N-benzoylphenylalaninol. Subsequently, the nonribosomal peptide synthase apmB activates the same substrates as does apmA (phenylalanine and benzoic acid) to produce N-benzoylphenylalanine before condensing N-benzoylphenylalanine and N-benzoylphenylalaninol to release asperphenamate. The chain is Nonribosomal peptide synthetase apmB from Penicillium brevicompactum.